Reading from the N-terminus, the 229-residue chain is 7-cyano-7-deazaguanine synthase (229 aa).

7-17 (LSGGLDSTTVL) serves as a coordination point for ATP. The Zn(2+) site is built by C191, C204, C207, and C210.

It belongs to the QueC family. Requires Zn(2+) as cofactor.

The enzyme catalyses 7-carboxy-7-deazaguanine + NH4(+) + ATP = 7-cyano-7-deazaguanine + ADP + phosphate + H2O + H(+). The protein operates within purine metabolism; 7-cyano-7-deazaguanine biosynthesis. Catalyzes the ATP-dependent conversion of 7-carboxy-7-deazaguanine (CDG) to 7-cyano-7-deazaguanine (preQ(0)). This chain is 7-cyano-7-deazaguanine synthase, found in Cyanothece sp. (strain PCC 7425 / ATCC 29141).